A 98-amino-acid chain; its full sequence is NADH-ubiquinone oxidoreductase chain 4L (98 aa).

The next 3 membrane-spanning stretches (helical) occupy residues 1 to 21 (MSMV…GLLM), 29 to 49 (SLLC…VTIL), and 61 to 81 (IILL…LVMV).

It belongs to the complex I subunit 4L family. As to quaternary structure, core subunit of respiratory chain NADH dehydrogenase (Complex I) which is composed of 45 different subunits.

It is found in the mitochondrion inner membrane. It catalyses the reaction a ubiquinone + NADH + 5 H(+)(in) = a ubiquinol + NAD(+) + 4 H(+)(out). Core subunit of the mitochondrial membrane respiratory chain NADH dehydrogenase (Complex I) which catalyzes electron transfer from NADH through the respiratory chain, using ubiquinone as an electron acceptor. Part of the enzyme membrane arm which is embedded in the lipid bilayer and involved in proton translocation. This chain is NADH-ubiquinone oxidoreductase chain 4L (MT-ND4L), found in Callorhinus ursinus (Northern fur seal).